The primary structure comprises 938 residues: Isoleucine--tRNA ligase (938 aa).

The 'HIGH' region motif lies at 58–68 (PYANGSIHIGH). Position 561 (Glu-561) interacts with L-isoleucyl-5'-AMP. The 'KMSKS' region motif lies at 602-606 (KMSKS). Lys-605 serves as a coordination point for ATP. The Zn(2+) site is built by Cys-901, Cys-904, Cys-921, and Cys-924.

It belongs to the class-I aminoacyl-tRNA synthetase family. IleS type 1 subfamily. Monomer. Zn(2+) is required as a cofactor.

It is found in the cytoplasm. The catalysed reaction is tRNA(Ile) + L-isoleucine + ATP = L-isoleucyl-tRNA(Ile) + AMP + diphosphate. Functionally, catalyzes the attachment of isoleucine to tRNA(Ile). As IleRS can inadvertently accommodate and process structurally similar amino acids such as valine, to avoid such errors it has two additional distinct tRNA(Ile)-dependent editing activities. One activity is designated as 'pretransfer' editing and involves the hydrolysis of activated Val-AMP. The other activity is designated 'posttransfer' editing and involves deacylation of mischarged Val-tRNA(Ile). The chain is Isoleucine--tRNA ligase from Klebsiella pneumoniae (strain 342).